Consider the following 266-residue polypeptide: Hydroxyethylthiazole kinase (266 aa).

Residue Met44 coordinates substrate. ATP is bound by residues Lys120 and Thr166. Gly193 is a binding site for substrate.

It belongs to the Thz kinase family. Mg(2+) is required as a cofactor.

The catalysed reaction is 5-(2-hydroxyethyl)-4-methylthiazole + ATP = 4-methyl-5-(2-phosphooxyethyl)-thiazole + ADP + H(+). The protein operates within cofactor biosynthesis; thiamine diphosphate biosynthesis; 4-methyl-5-(2-phosphoethyl)-thiazole from 5-(2-hydroxyethyl)-4-methylthiazole: step 1/1. Its function is as follows. Catalyzes the phosphorylation of the hydroxyl group of 4-methyl-5-beta-hydroxyethylthiazole (THZ). This chain is Hydroxyethylthiazole kinase, found in Syntrophomonas wolfei subsp. wolfei (strain DSM 2245B / Goettingen).